A 44-amino-acid chain; its full sequence is uncharacterized protein (44 aa).

The disordered stretch occupies residues 22-44 (LNSAPAFKSSQNTSTQAKPTFSN).

This is an uncharacterized protein from Dictyostelium discoideum (Social amoeba).